Reading from the N-terminus, the 191-residue chain is Probable protein-S-isoprenylcysteine O-methyltransferase (191 aa).

3 helical membrane-spanning segments follow: residues 8-28 (WLFAAALVIFHGSEYVLAAAF), 45-65 (YVLAMSFAMLEHLTEALLFPE), and 66-86 (LKEYWFVSYVGLVMVIIGEVI). Residues 110-113 (HKLI), Tyr-118, and 123-126 (HPGY) each bind S-adenosyl-L-methionine. Residues 129–149 (FLIWAVGTQVMLCNPLSTVAF) form a helical membrane-spanning segment. Arg-160 lines the substrate pocket. Glu-164 contributes to the S-adenosyl-L-methionine binding site.

The protein belongs to the class VI-like SAM-binding methyltransferase superfamily. Isoprenylcysteine carboxyl methyltransferase family. The cofactor is Zn(2+).

Its subcellular location is the endoplasmic reticulum membrane. The catalysed reaction is [protein]-C-terminal S-[(2E,6E)-farnesyl]-L-cysteine + S-adenosyl-L-methionine = [protein]-C-terminal S-[(2E,6E)-farnesyl]-L-cysteine methyl ester + S-adenosyl-L-homocysteine. Catalyzes the post-translational methylation of isoprenylated C-terminal cysteine residues. Carboxyl methylation is a reversible and potentially regulated step in the post-translational modification of prenylated proteins. The protein is Probable protein-S-isoprenylcysteine O-methyltransferase (ICMT) of Oryza sativa subsp. indica (Rice).